The following is a 369-amino-acid chain: S-adenosyl-L-methionine-dependent uroporphyrinogen III methyltransferase, chloroplastic (369 aa).

The transit peptide at 1–28 (MALVQRIPISSSSIRNWQQARTNLTPIC) directs the protein to the chloroplast. S-adenosyl-L-homocysteine contacts are provided by residues proline 124, 200-202 (GGD), 230-231 (TA), methionine 284, and threonine 341.

Belongs to the precorrin methyltransferase family. In terms of tissue distribution, mostly expressed in leaves, and, to a lower extent, in stems, flowers and siliques.

It is found in the plastid. It localises to the chloroplast. The enzyme catalyses uroporphyrinogen III + 2 S-adenosyl-L-methionine = precorrin-2 + 2 S-adenosyl-L-homocysteine + H(+). It functions in the pathway porphyrin-containing compound metabolism; siroheme biosynthesis; precorrin-2 from uroporphyrinogen III: step 1/1. In terms of biological role, essential protein required for siroheme biosynthesis. Catalyzes the two successive C-2 and C-7 methylation reactions involved in the conversion of uroporphyrinogen III to precorrin-2 via the intermediate formation of precorrin-1. It is a step in the biosynthesis of siroheme. Promotes nitrogen and sulfur assimilation as well as photosynthesis efficiency by triggering chlorophyll, nitrite reductase (NiR) and sulfite reductase (SiR) biosynthesis. The polypeptide is S-adenosyl-L-methionine-dependent uroporphyrinogen III methyltransferase, chloroplastic (Arabidopsis thaliana (Mouse-ear cress)).